The following is a 160-amino-acid chain: CXXC motif containing zinc binding protein (160 aa).

C33, C36, C67, and C70 together coordinate Zn(2+). At S75 the chain carries Phosphoserine.

This sequence belongs to the UPF0587 family. Monomer.

The chain is CXXC motif containing zinc binding protein (Czib) from Mus musculus (Mouse).